The chain runs to 144 residues: VYNQTTAVLGCVISGFYPDSVQVSWKKDRVDQSGVVLHSKQRNDSTFETVSYLTVPVVEWTTGDVYTCEVSHAGSRFNDRISMRYQKGGTINLPVPGGNTPCTCPPCSCSGCMPKLVYQTDLNVTLENGGQLQYNCHQQACKIK.

Positions 1–82 (VYNQTTAVLG…AGSRFNDRIS (82 aa)) constitute an Ig-like domain. N-linked (GlcNAc...) asparagine glycosylation is found at Asn-3, Asn-43, and Asn-123. Cys-11 and Cys-68 are oxidised to a cystine. A secretory tail region spans residues 87 to 144 (KGGTINLPVPGGNTPCTCPPCSCSGCMPKLVYQTDLNVTLENGGQLQYNCHQQACKIK).

In terms of tissue distribution, expressed mainly in lymphoid tissues including spleen, epigonal organ and circulating lymphocytes.

It is found in the secreted. In Heterodontus francisci (Horn shark), this protein is IgW chain C region, secreted form 1/3.